The sequence spans 158 residues: uncharacterized protein (158 aa).

The region spanning 13-110 (ESVGRALELV…WGDEYLPRPE (98 aa)) is the HTH hxlR-type domain.

This is an uncharacterized protein from Mycobacterium tuberculosis (strain ATCC 25618 / H37Rv).